Reading from the N-terminus, the 65-residue chain is Conotoxin Am6.4 (65 aa).

A disordered region spans residues 1-33 (STGKRNAGKLTVTDDVEADRDTDPDDKDPSVHN). Positions 1–36 (STGKRNAGKLTVTDDVEADRDTDPDDKDPSVHNSWR) are excised as a propeptide. Residues 14–26 (DDVEADRDTDPDD) are compositionally biased toward acidic residues. Intrachain disulfides connect Cys-40-Cys-50, Cys-45-Cys-59, and Cys-49-Cys-64.

Post-translationally, is not hydroxylated. As to expression, expressed by the venom duct.

It localises to the secreted. Probable toxin that inhibits ion channels. This is Conotoxin Am6.4 from Conus amadis (Amadis cone).